The sequence spans 218 residues: MLMYLLKYYPKILFIIEGTLVTLKYSVIAVILGLVIGMLLAICKVNKNRVLRLFANFYTSIFRGTPLLVQLSIIYFAAPYIINIKFNVFMAGVISFALNSGAYVSEVIRAGINTVDKGQFEAAEALAIPKFLIMKDIILPQAINNIFPSLVNELVNLIKESAIISMLGEMDLMRRAQIVSIETYNYFFPMLIAACCYYILVILISFIAKIIEKKMIVN.

Residues 19–208 form the ABC transmembrane type-1 domain; the sequence is TLVTLKYSVI…ILVILISFIA (190 aa). Helical transmembrane passes span 25-45, 57-79, 86-108, and 187-207; these read YSVI…ICKV, FYTS…FAAP, FNVF…SEVI, and FFPM…ISFI.

Belongs to the binding-protein-dependent transport system permease family. HisMQ subfamily.

It localises to the cell inner membrane. Functionally, part of the binding-protein-dependent transport system for glutamine; probably responsible for the translocation of the substrate across the membrane. This chain is Putative glutamine transport system permease protein GlnP (glnP), found in Rickettsia prowazekii (strain Madrid E).